The sequence spans 91 residues: MHCLRAIVKGKVQGVYFRDFTRTQATRLGLCGYAKNLANGAEVEVVAEGDKDALLEFLNLLRSGPPRAEVKDVETGWETATANYSDFRIKH.

The region spanning 3–91 (CLRAIVKGKV…ANYSDFRIKH (89 aa)) is the Acylphosphatase-like domain. Catalysis depends on residues Arg18 and Asn36.

Belongs to the acylphosphatase family.

The enzyme catalyses an acyl phosphate + H2O = a carboxylate + phosphate + H(+). The chain is Acylphosphatase (acyP) from Dehalococcoides mccartyi (strain ATCC BAA-2100 / JCM 16839 / KCTC 5957 / BAV1).